The sequence spans 212 residues: RNA chaperone ProQ (212 aa).

Residues 107 to 153 (QDKAKAKRVAQAKSANPAAKTAKKPVKKPVAKRPKPAQSSKPAKEPV) are disordered. Residues 117–126 (QAKSANPAAK) show a composition bias toward low complexity. Residues 127–141 (TAKKPVKKPVAKRPK) show a composition bias toward basic residues.

The protein belongs to the ProQ family.

It localises to the cytoplasm. Its function is as follows. RNA chaperone with significant RNA binding, RNA strand exchange and RNA duplexing activities. The sequence is that of RNA chaperone ProQ from Shewanella pealeana (strain ATCC 700345 / ANG-SQ1).